The chain runs to 174 residues: MGLLSQRKWTLSGSQQTGCVALTVPSFPWVASRMHYGRKQVSWIIFLKIGAGCQVHVGHDCSTLRRQQGAPWSFASSFRPAASPLAPPSPGVSGLFPPHERWSGGSQTRCGKCVKMQILGSTLKLFRHPPSQVTRLWGRHHLKTPAPFLQSPGIQLNPGKVPASLLRLATWKPL.

This is an uncharacterized protein from Homo sapiens (Human).